The primary structure comprises 856 residues: DNA mismatch repair protein MutS (856 aa).

618-625 (GPNMGGKS) is an ATP binding site.

The protein belongs to the DNA mismatch repair MutS family.

In terms of biological role, this protein is involved in the repair of mismatches in DNA. It is possible that it carries out the mismatch recognition step. This protein has a weak ATPase activity. The protein is DNA mismatch repair protein MutS of Shewanella baltica (strain OS155 / ATCC BAA-1091).